A 211-amino-acid chain; its full sequence is Pyridoxine/pyridoxamine 5'-phosphate oxidase (211 aa).

Residues 7–10 (RRDY) and lysine 65 each bind substrate. Residues 60–65 (RIVLLK), 75–76 (YT), arginine 81, lysine 82, and glutamine 104 contribute to the FMN site. Residues tyrosine 122, arginine 126, and serine 130 each coordinate substrate. FMN contacts are provided by residues 139–140 (QS) and tryptophan 184. Residue 190-192 (RLH) participates in substrate binding. Position 194 (arginine 194) interacts with FMN.

Belongs to the pyridoxamine 5'-phosphate oxidase family. As to quaternary structure, homodimer. It depends on FMN as a cofactor.

It catalyses the reaction pyridoxamine 5'-phosphate + O2 + H2O = pyridoxal 5'-phosphate + H2O2 + NH4(+). It carries out the reaction pyridoxine 5'-phosphate + O2 = pyridoxal 5'-phosphate + H2O2. It participates in cofactor metabolism; pyridoxal 5'-phosphate salvage; pyridoxal 5'-phosphate from pyridoxamine 5'-phosphate: step 1/1. It functions in the pathway cofactor metabolism; pyridoxal 5'-phosphate salvage; pyridoxal 5'-phosphate from pyridoxine 5'-phosphate: step 1/1. Functionally, catalyzes the oxidation of either pyridoxine 5'-phosphate (PNP) or pyridoxamine 5'-phosphate (PMP) into pyridoxal 5'-phosphate (PLP). This Aliivibrio salmonicida (strain LFI1238) (Vibrio salmonicida (strain LFI1238)) protein is Pyridoxine/pyridoxamine 5'-phosphate oxidase.